The sequence spans 1456 residues: Leucine-rich repeat-containing protein 9 (1456 aa).

LRR repeat units follow at residues 53–78 (FHNL…CLQL), 97–119 (CRNL…LEKL), 120–141 (IKLE…LQTL), 142–164 (KNLK…LDPN), 166–188 (QLEK…NLTK), 190–212 (TRLK…QLCN), 224–248 (LQRL…AMKK), and 264–287 (NEEL…RIKL). The disordered stretch occupies residues 305–325 (SSKGQSDTTPEAEKPRNSEVV). The LRR 9 repeat unit spans residues 339–362 (LSALDDRVTFWNKKLHEIEAIYRT). Phosphotyrosine is present on Tyr525. LRR repeat units lie at residues 661 to 683 (KPRP…TNIY), 684 to 705 (SHIV…LAKL), 706 to 727 (TGLR…VYHL), 729 to 748 (NLEY…GFRG), 749 to 772 (LMKL…INVL), 776 to 802 (TTSL…VIGR), 806 to 833 (LTHL…KITQ), 876 to 898 (YSKI…LEKL), 899 to 920 (ENLK…LESC), 921 to 942 (VNLE…ITRL), 943 to 965 (TKLS…TFDN), 967 to 991 (LHLH…TFTL), 993 to 1010 (ELYI…IYNL), 1013 to 1037 (LCNL…RFFV), 1082 to 1105 (FIQM…PVDH), 1106 to 1128 (FRNV…LIYL), 1129 to 1151 (PNVK…LKPQ), 1191 to 1214 (MQSL…QLNR), 1215 to 1237 (LRNL…LDNL), 1238 to 1260 (IVLQ…AFSK), 1262 to 1283 (SSLL…LQSL), 1284 to 1307 (VKLE…KLDV), and 1309 to 1335 (PSLR…IFRL).

This Mus musculus (Mouse) protein is Leucine-rich repeat-containing protein 9 (Lrrc9).